Reading from the N-terminus, the 256-residue chain is Triosephosphate isomerase (256 aa).

Residue 12-14 (NWK) participates in substrate binding. His99 serves as the catalytic Electrophile. Glu169 functions as the Proton acceptor in the catalytic mechanism. Residues Gly175, Ser214, and 235–236 (GG) contribute to the substrate site.

Belongs to the triosephosphate isomerase family. As to quaternary structure, homodimer.

It is found in the cytoplasm. It carries out the reaction D-glyceraldehyde 3-phosphate = dihydroxyacetone phosphate. The protein operates within carbohydrate biosynthesis; gluconeogenesis. Its pathway is carbohydrate degradation; glycolysis; D-glyceraldehyde 3-phosphate from glycerone phosphate: step 1/1. In terms of biological role, involved in the gluconeogenesis. Catalyzes stereospecifically the conversion of dihydroxyacetone phosphate (DHAP) to D-glyceraldehyde-3-phosphate (G3P). In Mesorhizobium japonicum (strain LMG 29417 / CECT 9101 / MAFF 303099) (Mesorhizobium loti (strain MAFF 303099)), this protein is Triosephosphate isomerase.